We begin with the raw amino-acid sequence, 537 residues long: CTP synthase (537 aa).

The tract at residues 1–265 (MTKYIFVTGG…GKYLTKRLKL (265 aa)) is amidoligase domain. Position 13 (serine 13) interacts with CTP. Position 13 (serine 13) interacts with UTP. Residue 14–19 (GLGKGI) participates in ATP binding. An L-glutamine-binding site is contributed by tyrosine 54. Aspartate 71 is a binding site for ATP. 2 residues coordinate Mg(2+): aspartate 71 and glutamate 139. CTP is bound by residues 146-148 (DIE), 186-191 (KTKPTQ), and lysine 222. UTP-binding positions include 186-191 (KTKPTQ) and lysine 222. A Glutamine amidotransferase type-1 domain is found at 290 to 532 (EIAIVGKYVK…VRAAKEYKQE (243 aa)). Glycine 351 is a binding site for L-glutamine. Residue cysteine 378 is the Nucleophile; for glutamine hydrolysis of the active site. Residues 379–382 (FGFQ), glutamate 402, and arginine 459 each bind L-glutamine. Residues histidine 505 and glutamate 507 contribute to the active site.

The protein belongs to the CTP synthase family. As to quaternary structure, homotetramer.

The enzyme catalyses UTP + L-glutamine + ATP + H2O = CTP + L-glutamate + ADP + phosphate + 2 H(+). It carries out the reaction L-glutamine + H2O = L-glutamate + NH4(+). The catalysed reaction is UTP + NH4(+) + ATP = CTP + ADP + phosphate + 2 H(+). The protein operates within pyrimidine metabolism; CTP biosynthesis via de novo pathway; CTP from UDP: step 2/2. Allosterically activated by GTP, when glutamine is the substrate; GTP has no effect on the reaction when ammonia is the substrate. The allosteric effector GTP functions by stabilizing the protein conformation that binds the tetrahedral intermediate(s) formed during glutamine hydrolysis. Inhibited by the product CTP, via allosteric rather than competitive inhibition. Catalyzes the ATP-dependent amination of UTP to CTP with either L-glutamine or ammonia as the source of nitrogen. Regulates intracellular CTP levels through interactions with the four ribonucleotide triphosphates. This chain is CTP synthase, found in Pyrococcus furiosus (strain ATCC 43587 / DSM 3638 / JCM 8422 / Vc1).